The primary structure comprises 235 residues: MTDYKHKINAEGEYLPFYGYTSISMLSSNTSSVQVLQNIEQLISQTIIGKYYSPLPHTTYHMTLFNIYCMASSPIPPVQRWTLENEENKIPEKLWLSEDVLKIKHIKALDCLRKLPSHLKITNLEFYYKKGLGVWVTLDEESFNAVTKLRKEFSVIYEHDDANLKLHITFAYLFKELPFKNGTREEKKALKTELLKLVKMLNTLKLWTLTNHNIYLYNSMTNYFPIDFFFSSSLV.

This is an uncharacterized protein from Invertebrate iridescent virus 6 (IIV-6).